Consider the following 160-residue polypeptide: SsrA-binding protein (160 aa).

Belongs to the SmpB family.

It is found in the cytoplasm. Its function is as follows. Required for rescue of stalled ribosomes mediated by trans-translation. Binds to transfer-messenger RNA (tmRNA), required for stable association of tmRNA with ribosomes. tmRNA and SmpB together mimic tRNA shape, replacing the anticodon stem-loop with SmpB. tmRNA is encoded by the ssrA gene; the 2 termini fold to resemble tRNA(Ala) and it encodes a 'tag peptide', a short internal open reading frame. During trans-translation Ala-aminoacylated tmRNA acts like a tRNA, entering the A-site of stalled ribosomes, displacing the stalled mRNA. The ribosome then switches to translate the ORF on the tmRNA; the nascent peptide is terminated with the 'tag peptide' encoded by the tmRNA and targeted for degradation. The ribosome is freed to recommence translation, which seems to be the essential function of trans-translation. This Photorhabdus laumondii subsp. laumondii (strain DSM 15139 / CIP 105565 / TT01) (Photorhabdus luminescens subsp. laumondii) protein is SsrA-binding protein.